Here is a 584-residue protein sequence, read N- to C-terminus: Proteasome-associated ATPase (584 aa).

Residues 8–90 (RHAERDRDEL…KEEVDRLSQP (83 aa)) adopt a coiled-coil conformation. 272-277 (GCGKTL) contacts ATP. Positions 583 to 584 (YL) are docks into pockets in the proteasome alpha-ring.

This sequence belongs to the AAA ATPase family. As to quaternary structure, homohexamer. Assembles into a hexameric ring structure that caps the 20S proteasome core. Strongly interacts with the prokaryotic ubiquitin-like protein Pup through a hydrophobic interface; the interacting region of ARC lies in its N-terminal coiled-coil domain. There is one Pup binding site per ARC hexamer ring. Upon ATP-binding, the C-terminus of ARC interacts with the alpha-rings of the proteasome core, possibly by binding to the intersubunit pockets.

It functions in the pathway protein degradation; proteasomal Pup-dependent pathway. ATPase which is responsible for recognizing, binding, unfolding and translocation of pupylated proteins into the bacterial 20S proteasome core particle. May be essential for opening the gate of the 20S proteasome via an interaction with its C-terminus, thereby allowing substrate entry and access to the site of proteolysis. Thus, the C-termini of the proteasomal ATPase may function like a 'key in a lock' to induce gate opening and therefore regulate proteolysis. The protein is Proteasome-associated ATPase of Thermobifida fusca (strain YX).